The primary structure comprises 1416 residues: DNA-directed RNA polymerase subunit beta' (1416 aa).

4 residues coordinate Zn(2+): cysteine 71, cysteine 73, cysteine 86, and cysteine 89. Mg(2+)-binding residues include aspartate 461, aspartate 463, and aspartate 465. Positions 815, 889, 896, and 899 each coordinate Zn(2+).

Belongs to the RNA polymerase beta' chain family. As to quaternary structure, the RNAP catalytic core consists of 2 alpha, 1 beta, 1 beta' and 1 omega subunit. When a sigma factor is associated with the core the holoenzyme is formed, which can initiate transcription. It depends on Mg(2+) as a cofactor. Zn(2+) serves as cofactor.

It catalyses the reaction RNA(n) + a ribonucleoside 5'-triphosphate = RNA(n+1) + diphosphate. Its function is as follows. DNA-dependent RNA polymerase catalyzes the transcription of DNA into RNA using the four ribonucleoside triphosphates as substrates. This chain is DNA-directed RNA polymerase subunit beta', found in Haemophilus influenzae (strain PittGG).